Here is a 192-residue protein sequence, read N- to C-terminus: Large ribosomal subunit protein bL9 (192 aa).

Residues 173 to 192 are disordered; that stretch reads ALRPEDFFDPEADGLDENEA. A compositionally biased stretch (acidic residues) spans 179 to 192; it reads FFDPEADGLDENEA.

It belongs to the bacterial ribosomal protein bL9 family.

In terms of biological role, binds to the 23S rRNA. The polypeptide is Large ribosomal subunit protein bL9 (Rhizobium etli (strain ATCC 51251 / DSM 11541 / JCM 21823 / NBRC 15573 / CFN 42)).